The sequence spans 186 residues: Peptidyl-tRNA hydrolase (186 aa).

Tyrosine 14 is a tRNA binding site. Histidine 19 serves as the catalytic Proton acceptor. Residues tyrosine 61, asparagine 63, and asparagine 107 each contribute to the tRNA site.

It belongs to the PTH family. Monomer.

It is found in the cytoplasm. The catalysed reaction is an N-acyl-L-alpha-aminoacyl-tRNA + H2O = an N-acyl-L-amino acid + a tRNA + H(+). Hydrolyzes ribosome-free peptidyl-tRNAs (with 1 or more amino acids incorporated), which drop off the ribosome during protein synthesis, or as a result of ribosome stalling. Its function is as follows. Catalyzes the release of premature peptidyl moieties from peptidyl-tRNA molecules trapped in stalled 50S ribosomal subunits, and thus maintains levels of free tRNAs and 50S ribosomes. The chain is Peptidyl-tRNA hydrolase from Helicobacter pylori (strain Shi470).